A 356-amino-acid chain; its full sequence is Golgi-resident adenosine 3',5'-bisphosphate 3'-phosphatase (356 aa).

Residue methionine 1 is modified to N-acetylmethionine. The Cytoplasmic portion of the chain corresponds to 1–12 (MAPMGIRLSPLG). A helical membrane pass occupies residues 13 to 33 (VAVFFLLGLGVLYHLYSGFLA). The Lumenal portion of the chain corresponds to 34 to 356 (GRFSLFGLGS…KLPDLEKSGH (323 aa)). Positions 84 to 104 (ESNVLHEKSKGKTREGADDKM) are disordered. Aspartate 108 (proton acceptor) is an active-site residue. Mg(2+) is bound by residues glutamate 131, aspartate 172, leucine 174, and aspartate 175. Catalysis depends on threonine 177, which acts as the Proton acceptor. Residues serine 240 and histidine 243 each coordinate AMP. Asparagine 257 carries an N-linked (GlcNAc...) asparagine glycan. Residues glycine 266 and lysine 270 each contribute to the AMP site. Mg(2+) is bound at residue aspartate 298.

Belongs to the inositol monophosphatase superfamily. Mg(2+) serves as cofactor. In terms of processing, N-glycosylated. Contains N-linked glycan resistant to endoglycosydase H.

It localises to the golgi apparatus. It is found in the trans-Golgi network membrane. The enzyme catalyses adenosine 3',5'-bisphosphate + H2O = AMP + phosphate. It participates in sulfur metabolism. With respect to regulation, strongly inhibited by lithium. Exhibits 3'-nucleotidase activity toward adenosine 3',5'-bisphosphate (PAP), namely hydrolyzes adenosine 3',5'-bisphosphate into adenosine 5'-monophosphate (AMP) and a phosphate. May play a role in the formation of skeletal elements derived through endochondral ossification, possibly by clearing adenosine 3',5'-bisphosphate produced by Golgi sulfotransferases during glycosaminoglycan sulfation. Has no activity toward 3'-phosphoadenosine 5'-phosphosulfate (PAPS) or inositol phosphate (IP) substrates including I(1)P, I(1,4)P2, I(1,3,4)P3, I(1,4,5)P3 and I(1,3,4,5)P4. In Mus musculus (Mouse), this protein is Golgi-resident adenosine 3',5'-bisphosphate 3'-phosphatase.